Reading from the N-terminus, the 126-residue chain is uncharacterized protein (126 aa).

The HTH hxlR-type domain maps to 8-106 (ISVEATLEVI…WGANHINRVY (99 aa)).

This is an uncharacterized protein from Bacillus subtilis (strain 168).